We begin with the raw amino-acid sequence, 85 residues long: Large ribosomal subunit protein bL27 (85 aa).

Positions 1-25 are disordered; the sequence is MAHKKAGSSSKNGRDSNPQYLGVKR. Positions 7–19 are enriched in polar residues; that stretch reads GSSSKNGRDSNPQ.

The protein belongs to the bacterial ribosomal protein bL27 family.

The protein is Large ribosomal subunit protein bL27 of Micrococcus luteus (strain ATCC 4698 / DSM 20030 / JCM 1464 / CCM 169 / CCUG 5858 / IAM 1056 / NBRC 3333 / NCIMB 9278 / NCTC 2665 / VKM Ac-2230) (Micrococcus lysodeikticus).